The primary structure comprises 563 residues: Cytochrome P450 monooxygenase phqL (563 aa).

3 helical membrane passes run 20–40 (ENFS…IIIF), 52–72 (IPVG…FVPG), and 80–100 (ALWL…VSIL). N279 carries N-linked (GlcNAc...) asparagine glycosylation. A helical transmembrane segment spans residues 362-382 (LVIFAGSGTVAVTIIGCLYFL). An N-linked (GlcNAc...) asparagine glycan is attached at N419. C502 is a binding site for heme.

Belongs to the cytochrome P450 family. Requires heme as cofactor.

It is found in the membrane. It participates in alkaloid biosynthesis. Functionally, cytochrome P450 monooxygenase; part of the gene cluster that mediates the biosynthesis of paraherquamide, a fungal indole alkaloid that belongs to a family of natural products containing a characteristic bicyclo[2.2.2]diazaoctane core. The first steps in the biosynthesis of paraherquamide is the production of the beta-methyl-proline precursor from L-isoleucine. They require oxidation of a terminally hydroxylated L-isoleucine to the corresponding aldehyde by enzymes which have still to be identified. Spontaneous cyclization and dehydration would yield the 4-methyl pyrolline-5-carboxylic acid, which is then reduced by the pyrroline-5-carboxylate reductase phqD leading to the beta-methyl-proline precursor. The next step of paraherquamide biosynthesis involves coupling of beta-methyl-proline and L-tryptophan by the bimodular NRPS phqB, to produce a monooxopiperazine intermediate. The reductase (R) domain of phqB utilizes NADPH for hydride transfer to reduce the thioester bond of the T domain-tethered linear dipeptide to a hemithioaminal intermediate, which spontaneously cleaves the C-S bond to release the aldehyde product. This compound undergoes spontaneous cyclization and dehydration to give a dienamine which is reverse prenylated at C-2 by the reverse prenyltransferase phqJ. The other prenyltransferase present in the cluster, phqI may be a redundant gene in the pathway. During biosynthetic assembly, the key step to produce the polycyclic core is catalyzed by the bifunctional reductase and intramolecular [4+2] Diels-Alderase, phqE, resulting in formation of the [2.2.2] diazaoctane intermediate preparaherquamide. Following formation of preparaherquamide, an indole 2,3-epoxidation-initiated pinacol-like rearrangement is catalyzed by the phqK FAD-dependent monooxygenase. The prenyltransferase phqA, the cytochrome P450 monooxygenase phqL, and the FAD-linked oxidoreductase phqH (or the cytochrome P450 monooxygenase phqM), are proposed to be involved in the formation of the pyran ring. The FAD-dependent monooxygenase phqK is likely responsible for generation of the spiro-oxindole, and the N-methylation is likely mediated by the phqN methyltransferase leading to the isolable natural product paraherquamide F. However, the order of these biosynthetic steps has still to be determined. In late-stage paraherquamide biosynthesis, the third P450 monooxygenase, phqO, is probably responsible for the C-14 hydroxylation, transforming paraherquamide F to paraherquamide G, and paraherquamide E to the final product paraherquamide A. The expansion from the 6-membered ring pyran (in paraherquamides F and G) to the 7-membered dioxepin ring (in paraherquamides A and E) represents a poorly understood but intriguing process that probably involves the 2-oxoglutarate-dependent dioxygenase phqC. Finally, the remaining members of the paraherquamide cluster, including phqI as well as phqM (or phqH), do not have a clearly prescribed role and appear to be redundant. The polypeptide is Cytochrome P450 monooxygenase phqL (Penicillium fellutanum).